The sequence spans 119 residues: Large ribosomal subunit protein uL24 (119 aa).

It belongs to the universal ribosomal protein uL24 family. As to quaternary structure, part of the 50S ribosomal subunit.

Functionally, one of two assembly initiator proteins, it binds directly to the 5'-end of the 23S rRNA, where it nucleates assembly of the 50S subunit. Its function is as follows. Located at the polypeptide exit tunnel on the outside of the subunit. The polypeptide is Large ribosomal subunit protein uL24 (Methanococcus maripaludis (strain DSM 14266 / JCM 13030 / NBRC 101832 / S2 / LL)).